The chain runs to 673 residues: UvrABC system protein B (673 aa).

A Helicase ATP-binding domain is found at 26 to 183; sequence EGLEDGLAHQ…RRLAELQYTR (158 aa). 39–46 is an ATP binding site; sequence GVTGSGKT. The short motif at 92-115 is the Beta-hairpin element; sequence YYDYYQPEAYVPSSDTFIEKDASV. The 167-residue stretch at 431–597 folds into the Helicase C-terminal domain; the sequence is QVDDLLSEIR…GLNKKVVDIL (167 aa). The disordered stretch occupies residues 608-627; the sequence is AKGRGKSRPIVEPDNVPMDM. The 36-residue stretch at 633-668 folds into the UVR domain; it reads QQKIHELEGLMMQHAQNLEFEEAAQIRDQLHQLREL.

This sequence belongs to the UvrB family. As to quaternary structure, forms a heterotetramer with UvrA during the search for lesions. Interacts with UvrC in an incision complex.

The protein resides in the cytoplasm. Functionally, the UvrABC repair system catalyzes the recognition and processing of DNA lesions. A damage recognition complex composed of 2 UvrA and 2 UvrB subunits scans DNA for abnormalities. Upon binding of the UvrA(2)B(2) complex to a putative damaged site, the DNA wraps around one UvrB monomer. DNA wrap is dependent on ATP binding by UvrB and probably causes local melting of the DNA helix, facilitating insertion of UvrB beta-hairpin between the DNA strands. Then UvrB probes one DNA strand for the presence of a lesion. If a lesion is found the UvrA subunits dissociate and the UvrB-DNA preincision complex is formed. This complex is subsequently bound by UvrC and the second UvrB is released. If no lesion is found, the DNA wraps around the other UvrB subunit that will check the other stand for damage. This Escherichia fergusonii (strain ATCC 35469 / DSM 13698 / CCUG 18766 / IAM 14443 / JCM 21226 / LMG 7866 / NBRC 102419 / NCTC 12128 / CDC 0568-73) protein is UvrABC system protein B.